The primary structure comprises 284 residues: Protein-S-isoprenylcysteine O-methyltransferase (284 aa).

Residues 1 to 16 (MAGCAARAPPGSEARL) are Cytoplasmic-facing. The helical transmembrane segment at 17-33 (SLATFLLGASVLALPLL) threads the bilayer. The Lumenal portion of the chain corresponds to 34 to 41 (TRAGLQGR). The helical transmembrane segment at 42-59 (TGLALYVAGLNALLLLLY) threads the bilayer. At 60–69 (RPPRYQIAIR) the chain is on the cytoplasmic side. Residues 70-87 (ACFLGFVFGCGTLLSFSQ) form a helical membrane-spanning segment. Residues 88–92 (SSWSH) lie on the Lumenal side of the membrane. Residues 93-112 (FGWYMCSLSLFHYSEYLVTA) form a helical membrane-spanning segment. Topologically, residues 113–131 (VNNPKSLSLDSFLLNHSLE) are cytoplasmic. A helical membrane pass occupies residues 132–149 (YTVAALSSWLEFTLENIF). Over 150-154 (WPELK) the chain is Lumenal. A helical membrane pass occupies residues 155 to 174 (QITWLSVTGLLMVVFGECLR). Residues 175–212 (KAAMFTAGSNFNHVVQNEKSDTHTLVTSGVYAWFRHPS) are Cytoplasmic-facing. S-adenosyl-L-methionine contacts are provided by residues glutamine 190, 197-200 (HTLV), tyrosine 205, and 210-213 (HPSY). Residues 213–228 (YVGWFYWSIGTQVMLC) traverse the membrane as a helical segment. A topological domain (lumenal) is located at residue asparagine 229. A helical membrane pass occupies residues 230-244 (PICGVSYALTVWRFF). The Cytoplasmic segment spans residues 245–284 (RDRTEEEEISLIHFFGEEYLEYKKRVPTGLPFIKGVKVDL). Arginine 247 serves as a coordination point for substrate. Position 251 (glutamate 251) interacts with S-adenosyl-L-methionine.

This sequence belongs to the class VI-like SAM-binding methyltransferase superfamily. Isoprenylcysteine carboxyl methyltransferase family. As to expression, ubiquitously expressed. Expressed at higher levels in the cerebellum and putamen than in other brain regions. Abundant expression seen in the Purkinje cells and pontine neurons.

The protein localises to the endoplasmic reticulum membrane. The catalysed reaction is [protein]-C-terminal S-[(2E,6E)-farnesyl]-L-cysteine + S-adenosyl-L-methionine = [protein]-C-terminal S-[(2E,6E)-farnesyl]-L-cysteine methyl ester + S-adenosyl-L-homocysteine. With respect to regulation, competitively inhibited by N-acetyl-S-trans,trans-farnesyl-l-cysteine (AFC). Catalyzes the post-translational methylation of isoprenylated C-terminal cysteine residues. This is Protein-S-isoprenylcysteine O-methyltransferase (ICMT) from Homo sapiens (Human).